A 349-amino-acid chain; its full sequence is Protein RAE1 (349 aa).

The segment at 1–21 is disordered; sequence MATFGAPATANSNPNKSYEVT. A2 bears the N-acetylalanine mark. Residues 9–21 show a composition bias toward polar residues; that stretch reads TANSNPNKSYEVT. 5 WD repeats span residues 23–62, 70–109, 112–151, 153–190, and 244–283; these read SPAD…ASLA, SHDQ…QPVT, MHEG…PVHT, QLPD…TEFK, and NDIY…RLKA. A DWD box motif is present at residues 128–144; that stretch reads LLATGSWDKTLKYWDTR.

The protein belongs to the WD repeat rae1 family. In terms of assembly, part of the nuclear pore complex (NPC). The NPC has an eight-fold symmetrical structure comprising a central transport channel and two rings, the cytoplasmic and nuclear rings, to which eight filaments are attached. The cytoplasmic filaments have loose ends, while the nuclear filaments are joined in a distal ring, forming a nuclear basket. NPCs are highly dynamic in configuration and composition, and can be devided in 3 subcomplexes, the NUP62 subcomplex, the NUP107-160 subcomplex and the NUP93 subcomplex, containing approximately 30 different nucleoporin proteins. Interacts with DDB1A.

It localises to the nucleus envelope. The protein localises to the nucleus. It is found in the nuclear pore complex. The sequence is that of Protein RAE1 from Arabidopsis thaliana (Mouse-ear cress).